Reading from the N-terminus, the 187-residue chain is Alpha-D-galactose-binding lectin (187 aa).

Residues 1-37 (MTFAKQSCFNSIILLSIATSYFKIGHKISELGNRIEK) form the signal peptide. The residue at position 39 (Thr-39) is an N-acetylthreonine. N-acetyl-alpha-D-galactosamine contacts are provided by residues 53-56 (HPKG), Asp-64, 72-76 (DIHER), His-101, Gly-104, Glu-112, 120-122 (DRH), His-145, Gly-148, Glu-156, and 164-166 (DKH).

Homodimer. Highest expression in the posterior part of the mantle. Highly expressed in gills and to a lesser extent in mid mantle and anterior muscle. Lowest expression in digestive gland and posterior adductor muscle. Scarcely detectable in hemocytes.

Agglutination of E.coli is inhibited by alpha-galactoside melibiose, but not by beta-galactoside lactose. Alpha-D-galactose-binding lectin. Binds D-GalNAc, but not glucose or its derivatives. Has hemagglutinating activity towards rabbit erythrocytes. Agglutinates bacteria. Has bacteriostatic activity on both Gram-positive and Gram-negative bacteria including B.subtilis, S.aureus, E.coli and V.parahaemolyticus, respectively. Has a dose-dependent cytotoxic effect on the human globotriaosylceramide (Gb3)-expressing Epstein-Barr virus (EBV)-positive Burkitt's lymphoma (Raji) cell line. Has dose-dependent cytotoxic effect on another Burkitt's lymphoma (Ramos) cell line, which does not possess the EBV genome, but also expresses Gb3. Binds to Gb3 in these cells leading to phosphorylation of MEK1/2, ERK1/2, JNK and p38 kinase, activation of caspase-9/3 and to expression of p21 and tumor necrosis factor (TNF)-alpha. No cytotoxic effect on the human chronic myelogenous leukemia (K-562) cell line, which does not express Gb3. May be involved in innate immunity acting as an antibacterial or antifungal agent. May be a pattern recognition receptor (PRR) involved in recognition of glycans found on parasitic or symbiotic microorganisms. The polypeptide is Alpha-D-galactose-binding lectin (Mytilus galloprovincialis (Mediterranean mussel)).